The following is a 118-amino-acid chain: DNA-binding protein SSO0352 (118 aa).

This sequence belongs to the PDCD5 family.

The polypeptide is DNA-binding protein SSO0352 (Saccharolobus solfataricus (strain ATCC 35092 / DSM 1617 / JCM 11322 / P2) (Sulfolobus solfataricus)).